A 35-amino-acid chain; its full sequence is Photosystem II reaction center protein T (35 aa).

The chain crosses the membrane as a helical span at residues 3 to 23 (ALVYTFLLVGTLGIIFFAIFF).

The protein belongs to the PsbT family. As to quaternary structure, PSII is composed of 1 copy each of membrane proteins PsbA, PsbB, PsbC, PsbD, PsbE, PsbF, PsbH, PsbI, PsbJ, PsbK, PsbL, PsbM, PsbT, PsbY, PsbZ, Psb30/Ycf12, at least 3 peripheral proteins of the oxygen-evolving complex and a large number of cofactors. It forms dimeric complexes.

The protein resides in the plastid. The protein localises to the chloroplast thylakoid membrane. In terms of biological role, found at the monomer-monomer interface of the photosystem II (PS II) dimer, plays a role in assembly and dimerization of PSII. PSII is a light-driven water plastoquinone oxidoreductase, using light energy to abstract electrons from H(2)O, generating a proton gradient subsequently used for ATP formation. The protein is Photosystem II reaction center protein T of Staurastrum punctulatum (Green alga).